The primary structure comprises 307 residues: Thymidylate synthase (307 aa).

The tract at residues 1–22 is disordered; sequence MLVEGSELQSGAQQPRTEAPQH. Residues 7-16 are compositionally biased toward polar residues; it reads ELQSGAQQPR. Position 44 (arginine 44) interacts with dUMP. Phosphoserine is present on serine 108. Residues 169–170, 189–190, 209–212, asparagine 220, and 250–252 contribute to the dUMP site; these read RR, CH, RSGD, and HIY. The Nucleophile role is filled by cysteine 189. Aspartate 212 serves as a coordination point for (6R)-5,10-methylene-5,6,7,8-tetrahydrofolate. Glycyl lysine isopeptide (Lys-Gly) (interchain with G-Cter in SUMO2) cross-links involve residues lysine 286 and lysine 302. Alanine 306 is a binding site for (6R)-5,10-methylene-5,6,7,8-tetrahydrofolate.

This sequence belongs to the thymidylate synthase family. In terms of assembly, homodimer.

The protein resides in the nucleus. The protein localises to the cytoplasm. It localises to the mitochondrion. Its subcellular location is the mitochondrion matrix. It is found in the mitochondrion inner membrane. It carries out the reaction dUMP + (6R)-5,10-methylene-5,6,7,8-tetrahydrofolate = 7,8-dihydrofolate + dTMP. It participates in pyrimidine metabolism; dTTP biosynthesis. Functionally, catalyzes the reductive methylation of 2'-deoxyuridine 5'-monophosphate (dUMP) to thymidine 5'-monophosphate (dTMP), using the cosubstrate, 5,10- methylenetetrahydrofolate (CH2H4folate) as a 1-carbon donor and reductant and contributes to the de novo mitochondrial thymidylate biosynthesis pathway. The sequence is that of Thymidylate synthase (Tyms) from Rattus norvegicus (Rat).